A 354-amino-acid polypeptide reads, in one-letter code: Hyaluronan and proteoglycan link protein 1 (354 aa).

Residues Met1–Ala15 constitute a propeptide that is removed on maturation. Residues Asn21 and Asn56 are each glycosylated (N-linked (GlcNAc...) asparagine). In terms of domain architecture, Ig-like V-type spans Pro38 to Val152. Cystine bridges form between Cys61-Cys139, Cys181-Cys252, Cys205-Cys226, Cys279-Cys349, and Cys304-Cys325. Link domains are found at residues Val159–Thr254 and Gly259–Arg351.

The protein belongs to the HAPLN family.

The protein localises to the secreted. The protein resides in the extracellular space. It is found in the extracellular matrix. Stabilizes the aggregates of proteoglycan monomers with hyaluronic acid in the extracellular cartilage matrix. This chain is Hyaluronan and proteoglycan link protein 1 (HAPLN1), found in Bos taurus (Bovine).